Reading from the N-terminus, the 135-residue chain is Ribonuclease P protein component (135 aa).

The protein belongs to the RnpA family. As to quaternary structure, consists of a catalytic RNA component (M1 or rnpB) and a protein subunit.

The catalysed reaction is Endonucleolytic cleavage of RNA, removing 5'-extranucleotides from tRNA precursor.. In terms of biological role, RNaseP catalyzes the removal of the 5'-leader sequence from pre-tRNA to produce the mature 5'-terminus. It can also cleave other RNA substrates such as 4.5S RNA. The protein component plays an auxiliary but essential role in vivo by binding to the 5'-leader sequence and broadening the substrate specificity of the ribozyme. The protein is Ribonuclease P protein component of Xylella fastidiosa (strain 9a5c).